Here is a 259-residue protein sequence, read N- to C-terminus: Undecaprenyl-diphosphatase 3 (259 aa).

8 helical membrane-spanning segments follow: residues 1-21, 39-59, 71-91, 99-119, 133-153, 174-194, 208-228, and 236-256; these read MNWLEAFILGIIQGLTEFLPI, AGLFLDTMLHIGTLLAVFIYY, FSKLMLLLIVGTIPAVVIGLL, ISKTGITIGWEFLVTGFFLYM, ITYKDAFIIGSFXAVAIFPAI, AYFSFLLSTPAIVGAIILQFV, SLIVGTLSAAFFGYIAVSWMI, and LKVFAYYVWGLGILILTLQFT.

It belongs to the UppP family.

It localises to the cell membrane. The enzyme catalyses di-trans,octa-cis-undecaprenyl diphosphate + H2O = di-trans,octa-cis-undecaprenyl phosphate + phosphate + H(+). In terms of biological role, catalyzes the dephosphorylation of undecaprenyl diphosphate (UPP). Confers resistance to bacitracin. This is Undecaprenyl-diphosphatase 3 from Bacillus cereus (strain ATCC 10987 / NRS 248).